The chain runs to 325 residues: Leucine carboxyl methyltransferase 1 (325 aa).

S-adenosyl-L-methionine-binding positions include R79, G104, D127, D174–L175, and E200.

The protein belongs to the methyltransferase superfamily. LCMT family.

It carries out the reaction [phosphatase 2A protein]-C-terminal L-leucine + S-adenosyl-L-methionine = [phosphatase 2A protein]-C-terminal L-leucine methyl ester + S-adenosyl-L-homocysteine. Its function is as follows. Methylates the carboxyl group of the C-terminal leucine residue of protein phosphatase 2A catalytic subunits to form alpha-leucine ester residues. This chain is Leucine carboxyl methyltransferase 1 (PPM1), found in Eremothecium gossypii (strain ATCC 10895 / CBS 109.51 / FGSC 9923 / NRRL Y-1056) (Yeast).